A 177-amino-acid chain; its full sequence is Non-specific lipid transfer protein GPI-anchored 22 (177 aa).

An N-terminal signal peptide occupies residues 1 to 29 (MARFMAYNQNPQMLALCITVAVMFLGVRS). 4 disulfides stabilise this stretch: Cys-38–Cys-81, Cys-48–Cys-63, Cys-64–Cys-108, and Cys-79–Cys-117. Asn-113 is a glycosylation site (N-linked (GlcNAc...) asparagine). Residue Ser-152 is the site of GPI-anchor amidated serine attachment. The propeptide at 153-177 (SSIKGRDNKQFGLMMAGALSIWYIM) is removed in mature form.

The protein belongs to the plant LTP family. Expressed in seedlings, preferentially in hypocotyls and roots. Also observed in siliques.

The protein resides in the cell membrane. Functionally, probable lipid transfer protein. In Arabidopsis thaliana (Mouse-ear cress), this protein is Non-specific lipid transfer protein GPI-anchored 22.